Reading from the N-terminus, the 355-residue chain is Probable tRNA-dihydrouridine synthase 1 (355 aa).

FMN contacts are provided by residues 48-50 and Q102; that span reads PLS. C132 acts as the Proton donor in catalysis. Residues K171, 232-234, and 256-257 contribute to the FMN site; these read NGD and SR.

Belongs to the Dus family. It depends on FMN as a cofactor.

It catalyses the reaction a 5,6-dihydrouridine in tRNA + NAD(+) = a uridine in tRNA + NADH + H(+). The catalysed reaction is a 5,6-dihydrouridine in tRNA + NADP(+) = a uridine in tRNA + NADPH + H(+). Functionally, catalyzes the synthesis of 5,6-dihydrouridine (D), a modified base found in the D-loop of most tRNAs, via the reduction of the C5-C6 double bond in target uridines. The chain is Probable tRNA-dihydrouridine synthase 1 (dus1) from Synechocystis sp. (strain ATCC 27184 / PCC 6803 / Kazusa).